We begin with the raw amino-acid sequence, 342 residues long: S-adenosylmethionine:tRNA ribosyltransferase-isomerase (342 aa).

The protein belongs to the QueA family. As to quaternary structure, monomer.

It localises to the cytoplasm. The enzyme catalyses 7-aminomethyl-7-carbaguanosine(34) in tRNA + S-adenosyl-L-methionine = epoxyqueuosine(34) in tRNA + adenine + L-methionine + 2 H(+). It functions in the pathway tRNA modification; tRNA-queuosine biosynthesis. Transfers and isomerizes the ribose moiety from AdoMet to the 7-aminomethyl group of 7-deazaguanine (preQ1-tRNA) to give epoxyqueuosine (oQ-tRNA). This Campylobacter jejuni subsp. jejuni serotype O:6 (strain 81116 / NCTC 11828) protein is S-adenosylmethionine:tRNA ribosyltransferase-isomerase.